A 337-amino-acid polypeptide reads, in one-letter code: MTLQIGVIGCGAIGQDHIRRLMRTLSGARVVAVNDIDPQQARDAVTHYAPDAEIYADGRDLIAAADVQAVLVTSWGPTHEAFVLDAIAHGKPVFCEKPLAVTADGCMRIVEAELAHGTRLVQVGFMRPYDEGYRALKRVIDSGQIGAPLMLHCAHRNQSVGERYTTDMAITDTLIHELDVLRWLLGEDYVSAQVVYPKKTRHASTHLADPQIVLLETVSGVRIDVEIFVNCQYGYDIQCEVVGENGIAKLPDPPAVGLKHLARQSVEIMTDWKERFIASYDVELQAFIDGVRRQTLTGPSAWDGYAAAVAADACVRAQKSGAVEPIAIAERPAFYRA.

It belongs to the Gfo/Idh/MocA family. Homotetramer.

The enzyme catalyses myo-inositol + NAD(+) = scyllo-inosose + NADH + H(+). In terms of biological role, involved in the oxidation of myo-inositol (MI) to 2-keto-myo-inositol (2KMI or 2-inosose). In Burkholderia multivorans (strain ATCC 17616 / 249), this protein is Inositol 2-dehydrogenase.